We begin with the raw amino-acid sequence, 245 residues long: Uridylate kinase (245 aa).

12 to 15 (KISG) lines the ATP pocket. UMP is bound at residue Gly-55. Positions 56 and 60 each coordinate ATP. UMP contacts are provided by residues Asp-76 and 137–144 (AGAPYLTT). Residues Thr-164, Tyr-171, and Asp-174 each contribute to the ATP site.

This sequence belongs to the UMP kinase family. As to quaternary structure, homohexamer.

Its subcellular location is the cytoplasm. The catalysed reaction is UMP + ATP = UDP + ADP. It participates in pyrimidine metabolism; CTP biosynthesis via de novo pathway; UDP from UMP (UMPK route): step 1/1. Its activity is regulated as follows. Inhibited by UTP. Catalyzes the reversible phosphorylation of UMP to UDP. This chain is Uridylate kinase, found in Chlamydia trachomatis serovar A (strain ATCC VR-571B / DSM 19440 / HAR-13).